A 448-amino-acid chain; its full sequence is tRNA(Ile)-lysidine synthase (448 aa).

Ser-28–Ser-33 is an ATP binding site.

It belongs to the tRNA(Ile)-lysidine synthase family.

Its subcellular location is the cytoplasm. It carries out the reaction cytidine(34) in tRNA(Ile2) + L-lysine + ATP = lysidine(34) in tRNA(Ile2) + AMP + diphosphate + H(+). Ligates lysine onto the cytidine present at position 34 of the AUA codon-specific tRNA(Ile) that contains the anticodon CAU, in an ATP-dependent manner. Cytidine is converted to lysidine, thus changing the amino acid specificity of the tRNA from methionine to isoleucine. The protein is tRNA(Ile)-lysidine synthase of Lactiplantibacillus plantarum (strain ATCC BAA-793 / NCIMB 8826 / WCFS1) (Lactobacillus plantarum).